An 89-amino-acid chain; its full sequence is UPF0367 protein PMM0124 (89 aa).

It belongs to the UPF0367 family.

This chain is UPF0367 protein PMM0124, found in Prochlorococcus marinus subsp. pastoris (strain CCMP1986 / NIES-2087 / MED4).